Here is a 235-residue protein sequence, read N- to C-terminus: Auracyanin-B (235 aa).

Positions 1 to 21 are enriched in low complexity; it reads MSWRGSGRSNFRSRSSSNGGS. Disordered regions lie at residues 1-27 and 64-107; these read MSWR…SGGS and ATPR…NVVN. The signal sequence occupies residues 1–56; sequence MSWRGSGRSNFRSRSSSNGGSTFSGGSAGGPPLIVMMGLAFGAGLIMLIVMIASNA. A propeptide spanning residues 57 to 80 is cleaved from the precursor; it reads TAGGFVAATPRPTATPRPTAAPAP. A compositionally biased stretch (pro residues) spans 69 to 86; sequence TATPRPTAAPAPTQPPAA. The span at 87–100 shows a compositional bias: low complexity; it reads QPTTAPATQAANAP. The 125-residue stretch at 111–235 folds into the Plastocyanin-like domain; it reads AQTVEVRAAP…GMKGTLTVTP (125 aa). Histidine 152, cysteine 217, histidine 222, and methionine 227 together coordinate Cu cation.

Belongs to the multicopper oxidase family. The cofactor is Cu cation. In terms of processing, glycosylated.

The protein resides in the cell membrane. In terms of biological role, probably a soluble electron acceptor for the integral membrane protein electron transfer alternative complex III (ACIII). The polypeptide is Auracyanin-B (Chloroflexus aurantiacus (strain ATCC 29366 / DSM 635 / J-10-fl)).